The following is a 135-amino-acid chain: MIVIAFDFGIKKIGVAVGENITKKGRPLSVLNAQNGCPNWQLVKNLIQYWQPQFIVVGLPLNINGTKQKITNKSEKFANLLKYKFNIVVKMHDERLTTVEAKSIIFKKNGFKGLKEEKIHSCAAVIILESWFNQY.

The protein belongs to the YqgF nuclease family.

It localises to the cytoplasm. In terms of biological role, could be a nuclease involved in processing of the 5'-end of pre-16S rRNA. In Buchnera aphidicola subsp. Acyrthosiphon pisum (strain 5A), this protein is Putative pre-16S rRNA nuclease.